Reading from the N-terminus, the 338-residue chain is Putative pectinesterase 63 (338 aa).

Positions 1 to 24 (MGYNYVSLIVTILLVVITSPVVFG) are cleaved as a signal peptide. Substrate is bound by residues Thr116 and Gln151. The active-site Proton donor is Asp174. Asp195 (nucleophile) is an active-site residue. Position 252 (Arg252) interacts with substrate.

This sequence belongs to the pectinesterase family.

The protein localises to the secreted. It localises to the cell wall. The enzyme catalyses [(1-&gt;4)-alpha-D-galacturonosyl methyl ester](n) + n H2O = [(1-&gt;4)-alpha-D-galacturonosyl](n) + n methanol + n H(+). The protein operates within glycan metabolism; pectin degradation; 2-dehydro-3-deoxy-D-gluconate from pectin: step 1/5. Its function is as follows. Acts in the modification of cell walls via demethylesterification of cell wall pectin. This is Putative pectinesterase 63 (PME63) from Arabidopsis thaliana (Mouse-ear cress).